A 207-amino-acid chain; its full sequence is Ion-translocating oxidoreductase complex subunit G (207 aa).

The chain crosses the membrane as a helical span at residues 11–31 (GILLGFIALLCTIISAGIYFL). Position 175 is an FMN phosphoryl threonine (threonine 175).

This sequence belongs to the RnfG family. As to quaternary structure, the complex is composed of six subunits: RnfA, RnfB, RnfC, RnfD, RnfE and RnfG. It depends on FMN as a cofactor.

The protein localises to the cell inner membrane. Its function is as follows. Part of a membrane-bound complex that couples electron transfer with translocation of ions across the membrane. The protein is Ion-translocating oxidoreductase complex subunit G of Haemophilus influenzae (strain PittEE).